We begin with the raw amino-acid sequence, 467 residues long: Stromal membrane-associated protein 1 (467 aa).

An Arf-GAP domain is found at Gln18 to Ile136. Residues Cys33–Cys56 form a C4-type zinc finger. Polar residues predominate over residues Pro145–Leu155. Disordered stretches follow at residues Pro145–Pro224 and Lys408–Lys467. 2 stretches are compositionally biased toward basic and acidic residues: residues Asp160–Ala185 and Lys192–Lys204. The Interaction with clathrin heavy chains motif lies at Leu218 to Asp222. A compositionally biased stretch (polar residues) spans Gln413–Pro438. A compositionally biased stretch (low complexity) spans Ser446 to Lys467.

In terms of assembly, interacts with ARF6. Interacts with clathrin heavy chains via the clathrin box-like motif. Detected in bone marrow, adrenal gland, trachea, lymph node, spinal cord, peripheral blood leukocytes, thyroid and stomach.

Its subcellular location is the cell membrane. Its function is as follows. GTPase activating protein that acts on ARF6. Plays a role in clathrin-dependent endocytosis. May play a role in erythropoiesis. This is Stromal membrane-associated protein 1 (SMAP1) from Homo sapiens (Human).